The chain runs to 247 residues: DNA polymerase sliding clamp (247 aa).

It belongs to the PCNA family. Homotrimer. The subunits circularize to form a toroid; DNA passes through its center. Replication factor C (RFC) is required to load the toroid on the DNA.

In terms of biological role, sliding clamp subunit that acts as a moving platform for DNA processing. Responsible for tethering the catalytic subunit of DNA polymerase and other proteins to DNA during high-speed replication. The polypeptide is DNA polymerase sliding clamp (Methanocorpusculum labreanum (strain ATCC 43576 / DSM 4855 / Z)).